We begin with the raw amino-acid sequence, 362 residues long: tRNA 2-selenouridine synthase (362 aa).

The region spanning 12–135 (FLNDTPLLDV…LRRFLIDEME (124 aa)) is the Rhodanese domain. Cys-95 serves as the catalytic S-selanylcysteine intermediate.

Belongs to the SelU family. As to quaternary structure, monomer.

The catalysed reaction is 5-methylaminomethyl-2-thiouridine(34) in tRNA + selenophosphate + (2E)-geranyl diphosphate + H2O + H(+) = 5-methylaminomethyl-2-selenouridine(34) in tRNA + (2E)-thiogeraniol + phosphate + diphosphate. It carries out the reaction 5-methylaminomethyl-2-thiouridine(34) in tRNA + (2E)-geranyl diphosphate = 5-methylaminomethyl-S-(2E)-geranyl-thiouridine(34) in tRNA + diphosphate. The enzyme catalyses 5-methylaminomethyl-S-(2E)-geranyl-thiouridine(34) in tRNA + selenophosphate + H(+) = 5-methylaminomethyl-2-(Se-phospho)selenouridine(34) in tRNA + (2E)-thiogeraniol. It catalyses the reaction 5-methylaminomethyl-2-(Se-phospho)selenouridine(34) in tRNA + H2O = 5-methylaminomethyl-2-selenouridine(34) in tRNA + phosphate. Its function is as follows. Involved in the post-transcriptional modification of the uridine at the wobble position (U34) of tRNA(Lys), tRNA(Glu) and tRNA(Gln). Catalyzes the conversion of 2-thiouridine (S2U-RNA) to 2-selenouridine (Se2U-RNA). Acts in a two-step process involving geranylation of 2-thiouridine (S2U) to S-geranyl-2-thiouridine (geS2U) and subsequent selenation of the latter derivative to 2-selenouridine (Se2U) in the tRNA chain. This chain is tRNA 2-selenouridine synthase, found in Alcanivorax borkumensis (strain ATCC 700651 / DSM 11573 / NCIMB 13689 / SK2).